Consider the following 230-residue polypeptide: RING finger protein 141 (230 aa).

Residues glutamate 154–cysteine 191 form an RING-type zinc finger.

The protein is RING finger protein 141 (RNF141) of Gallus gallus (Chicken).